The following is a 758-amino-acid chain: CRISPR system single-strand-specific deoxyribonuclease Cas10/Csm1 (subtype III-A) (758 aa).

The interval M1–G82 is HD domain. The GGDEF domain occupies K509–S647.

This sequence belongs to the CRISPR-associated Cas10/Csm1 family. In terms of assembly, part of the Csm effector complex that includes at least Cas10(1), Csm2(3), Csm3(5), Csm4(1), Csm5(1) and mature crRNA. The Csm complex is elongated and slightly twisted with a maximal length of 215 Angstroms and a diameter of 75-80 Angstroms. It has been modeled to have a central protein filamant of Csm3 subunits along which the dsRNA helix of paired crRNA and target RNA binds. The filament is capped at one end by Cas10 and Csm4 and at the other end by Csm5; ssDNA is thought to bind to the N-terminal HD domain of Cas10. Csm with a precursor crRNA does not include Csm5, while Cas6, the enzyme probably involved in pre-crRNA processing, is found associated with a subset of the Csm complex. The cofactor is a divalent metal cation.

The enzyme catalyses 6 ATP = cyclic hexaadenylate + 6 diphosphate. SsDNase activity is activated by target RNA binding to the Csm-crRNA complex and is inhibited by EDTA. CRISPR (clustered regularly interspaced short palindromic repeat) is an adaptive immune system that provides protection against mobile genetic elements (viruses, transposable elements and conjugative plasmids). CRISPR clusters contain spacers, sequences complementary to antecedent mobile elements, and target invading nucleic acids. CRISPR clusters are transcribed and processed into CRISPR RNA (crRNA). The type III-A Csm effector complex binds crRNA and acts as a crRNA-guided RNase, DNase and cyclic oligoadenylate synthase; binding of target RNA cognate to the crRNA is required for all activities. In a heterologous host this Csm effector complex restricts ssRNA phage MS2, suggesting it may target RNA viruses in vivo. Its function is as follows. Csm functions as a non-specific ssDNase. Base-pairing between crRNA and target RNA to form a ternary Csm complex activates a ssDNase activity; target RNA cleavage suppresses the ssDNase, a temporal control that prevents uncontrolled DNA degradation. Viral RNA transcripts probably tether the Csm complex to the viral genome, recruiting Cas10 ssDNA activity which is able to degrade DNA in the transcription bubble, spatially controlling the DNase activity. In terms of biological role, this subunit has a weak ssDNase activity that is dramatically activated by the ternary Csm effector complex (the crRNA, Cas proteins and a cognate target ssRNA). Target RNA and ssDNA are cleaved simultaneously, although RNase activity (of Csm3) is much faster. RNA cleavage by Csm3 is not required for ssDNase activity as Csm complex with inactive Csm3 still has ssDNase activity; however as the cleaved target RNA products dissociate away ssDNase activity decreases. Self-recognition, with subsequent repression of the ssDNase activity, occurs when the 5' handle of the crRNA bases pairs with the 3' flanking sequence of the target RNA (which would occur if the CRISPR locus were transcribed as an anti-pre-crRNA). This protein has low activity on dsDNA which is not stimulated by the Csm complex. Functionally, this subunit is a single-strand-specific deoxyribonuclease (ssDNase) which digests both linear and circular ssDNA; it has both exo- and endonuclease activity. When associated with the ternary Csm effector complex (the crRNA, Cas proteins and a cognate target ssRNA) synthesizes cyclic oligoadenylates (cOA) from ATP, producing cyclic triadenylate (cA3) up to cyclic hexaadenylate (cA6), which is the active cOA. The enzyme is also able to cyclize pppA3 up to pppA6. cOAs are second messengers that induce an antiviral state important for defense against invading nucleic acids. Synthesis of cOA can occur with AMP plus ATP, 2'dATP or 3'dATP (but no other nucleotides), and requires a free 3'-OH ribose moiety. This is CRISPR system single-strand-specific deoxyribonuclease Cas10/Csm1 (subtype III-A) from Streptococcus thermophilus.